The sequence spans 461 residues: Photosystem II CP43 reaction center protein (461 aa).

Residues 1–2 (ME) constitute a propeptide that is removed on maturation. T3 carries the post-translational modification N-acetylthreonine. T3 bears the Phosphothreonine mark. A run of 5 helical transmembrane segments spans residues 57-81 (LFEVAHFVPEKPMYEQGLILLPHLA), 122-143 (LLGPETLEESFPFFGYVWKDRN), 166-188 (KALYFGGVYDTWAPGGGDVRKIT), 243-263 (KPFAWARRALVWSGEAYLSYS), and 279-300 (WFNNTAYPSEFYGPTGPEASQA). Residue E355 participates in [CaMn4O5] cluster binding. Residues 435–459 (RARAAAAGFEKGIDRDFEPVLSMTP) form a helical membrane-spanning segment.

Belongs to the PsbB/PsbC family. PsbC subfamily. PSII is composed of 1 copy each of membrane proteins PsbA, PsbB, PsbC, PsbD, PsbE, PsbF, PsbH, PsbI, PsbJ, PsbK, PsbL, PsbM, PsbT, PsbX, PsbY, PsbZ, Psb30/Ycf12, at least 3 peripheral proteins of the oxygen-evolving complex and a large number of cofactors. It forms dimeric complexes. The cofactor is Binds multiple chlorophylls and provides some of the ligands for the Ca-4Mn-5O cluster of the oxygen-evolving complex. It may also provide a ligand for a Cl- that is required for oxygen evolution. PSII binds additional chlorophylls, carotenoids and specific lipids..

It localises to the plastid. The protein localises to the chloroplast thylakoid membrane. Functionally, one of the components of the core complex of photosystem II (PSII). It binds chlorophyll and helps catalyze the primary light-induced photochemical processes of PSII. PSII is a light-driven water:plastoquinone oxidoreductase, using light energy to abstract electrons from H(2)O, generating O(2) and a proton gradient subsequently used for ATP formation. The chain is Photosystem II CP43 reaction center protein from Nicotiana sylvestris (Wood tobacco).